The following is a 393-amino-acid chain: uncharacterized protein (393 aa).

At 1–17 (MVSKDQTSFNKRWTLGL) the chain is on the cytoplasmic side. Residues 18-38 (LMLGLVIILWVLSSFLINLIF) traverse the membrane as a helical segment. At 39–46 (EDDSYRKP) the chain is on the vacuolar side. The chain crosses the membrane as a helical span at residues 47-67 (FFITYTNTAAFIFYLFPTAKA). At 68 to 132 (VVVNYKDTGR…LYETIKLSAE (65 aa)) the chain is on the cytoplasmic side. The residue at position 93 (Ser-93) is a Phosphoserine. Residues 133-153 (FCILWFTANLVTNASLAFTSV) traverse the membrane as a helical segment. Over 154-156 (ASQ) the chain is Vacuolar. A helical transmembrane segment spans residues 157–176 (TILSTTSSFFTLFIGAICHV). At 177–182 (ESLSKS) the chain is on the cytoplasmic side. Residues 183-200 (KVLGSFISFVGIIMVTKS) traverse the membrane as a helical segment. At 201 to 219 (DSHQRYQRHIADVSGDDND) the chain is on the vacuolar side. Residues 220-240 (AVQVLIGNLLALAGAVLYGVY) traverse the membrane as a helical segment. The Cytoplasmic portion of the chain corresponds to 241–257 (STLLKREVGDETRVNMK). Residues 258–278 (IFFGFVGLFNLLFLWPSLIVL) form a helical membrane-spanning segment. Residues 279 to 292 (DFFGWEPFSLPKDP) lie on the Vacuolar side of the membrane. The helical transmembrane segment at 293–313 (KVVVIIFVNCLITFVSDFCWA) threads the bilayer. The Cytoplasmic portion of the chain corresponds to 314–321 (KAMLLTSP). The chain crosses the membrane as a helical span at residues 322–342 (LTVTVGLSITIPLAMFGDVIF). Residues 343 to 345 (KHK) lie on the Vacuolar side of the membrane. The helical transmembrane segment at 346 to 366 (TMSALYLFGATLILGSFFIIN) threads the bilayer. The Cytoplasmic segment spans residues 367–393 (KSSEEEHFENSITASNYESVEVPAANN).

It belongs to the TPT transporter family.

It localises to the vacuole membrane. This is an uncharacterized protein from Saccharomyces cerevisiae (strain ATCC 204508 / S288c) (Baker's yeast).